A 220-amino-acid chain; its full sequence is Ribose-5-phosphate isomerase A (220 aa).

Residues 25–28 (TGST), 80–83 (DGAD), and 93–96 (KGGG) each bind substrate. Glutamate 102 serves as the catalytic Proton acceptor. Lysine 120 contacts substrate.

It belongs to the ribose 5-phosphate isomerase family. In terms of assembly, homodimer.

The enzyme catalyses aldehydo-D-ribose 5-phosphate = D-ribulose 5-phosphate. The protein operates within carbohydrate degradation; pentose phosphate pathway; D-ribose 5-phosphate from D-ribulose 5-phosphate (non-oxidative stage): step 1/1. Catalyzes the reversible conversion of ribose-5-phosphate to ribulose 5-phosphate. The protein is Ribose-5-phosphate isomerase A of Bacillus thuringiensis subsp. konkukian (strain 97-27).